The following is a 516-amino-acid chain: Glycosyl hydrolase family 109 protein 4 (516 aa).

Positions 1 to 18 (MKKIKLLLVAGACVVLSA) are cleaved as a signal peptide. A lipid anchor (N-palmitoyl cysteine) is attached at cysteine 19. Cysteine 19 is lipidated: S-diacylglycerol cysteine. Residues 76-77 (MR), aspartate 98, 146-149 (WLHH), 166-167 (EV), and asparagine 195 contribute to the NAD(+) site. Substrate-binding positions include tyrosine 224, arginine 247, 259 to 262 (YATH), and tyrosine 337. Position 259 (tyrosine 259) interacts with NAD(+).

It belongs to the Gfo/Idh/MocA family. Glycosyl hydrolase 109 subfamily. Requires NAD(+) as cofactor.

It is found in the cell membrane. Glycosidase. The chain is Glycosyl hydrolase family 109 protein 4 from Phocaeicola vulgatus (strain ATCC 8482 / DSM 1447 / JCM 5826 / CCUG 4940 / NBRC 14291 / NCTC 11154) (Bacteroides vulgatus).